A 445-amino-acid polypeptide reads, in one-letter code: Glycine betaine monooxygenase oxygenase subunit (445 aa).

The Rieske domain occupies 73-180 (WLFVGMTCEI…VTHAGGFLFV (108 aa)). 4 residues coordinate [2Fe-2S] cluster: C115, H117, C135, and H138. Positions 234 and 239 each coordinate Fe cation.

It belongs to the bacterial ring-hydroxylating dioxygenase alpha subunit family. In terms of assembly, homotrimer. The system is composed of an oxygenase subunit (BmoA) and a reductase subunit (BmoB). Maximal specific activity is obtained when the ratio of BmoA to BmoB is 5:1. [2Fe-2S] cluster serves as cofactor. It depends on Fe cation as a cofactor.

It carries out the reaction glycine betaine + NADH + O2 + H(+) = N,N-dimethylglycine + formaldehyde + NAD(+) + H2O. Its activity is regulated as follows. Activity is absolutely dependent on the presence of BmoB. Glycine betaine monooxygenase activity is significantly enhanced by Fe(2+) and severely inhibited by heavy-metal ions, including Co(2+), Mn(2+), Zn(2+), Cu(2+) and Ag(+). Severely inhibited by EDTA. Its function is as follows. Involved in degradation of glycine betaine. Part of a Rieske-type oxygenase system that catalyzes the conversion of glycine betaine (GB) to dimethylglycine (DMG). This subunit is the terminal oxygenase component of the system. Is specific for GB, and does not show any activity on choline, L-carnitine, stachydrine, dimethylglycine or sarcosine. Activity is strictly dependent on NADH. This chain is Glycine betaine monooxygenase oxygenase subunit, found in Chromohalobacter salexigens (strain ATCC BAA-138 / DSM 3043 / CIP 106854 / NCIMB 13768 / 1H11).